A 304-amino-acid chain; its full sequence is tRNA pseudouridine synthase B (304 aa).

Asp38 acts as the Nucleophile in catalysis. Residues 227–302 enclose the PUA domain; sequence LPKVEIYKDF…RIFKLKKVFK (76 aa).

Belongs to the pseudouridine synthase TruB family. Type 1 subfamily.

It carries out the reaction uridine(55) in tRNA = pseudouridine(55) in tRNA. Responsible for synthesis of pseudouridine from uracil-55 in the psi GC loop of transfer RNAs. This is tRNA pseudouridine synthase B from Thermosipho melanesiensis (strain DSM 12029 / CIP 104789 / BI429).